The primary structure comprises 306 residues: Dermonecrotic toxin LiSicTox-alphaIA2bi (306 aa).

An N-terminal signal peptide occupies residues 1–18 (MLPYIALILVCWSVLSQA). Residues 19 to 26 (AQTDVEGR) constitute a propeptide that is removed on maturation. Histidine 38 is a catalytic residue. Mg(2+) is bound by residues glutamate 58 and aspartate 60. Histidine 74 functions as the Nucleophile in the catalytic mechanism. Disulfide bonds link cysteine 78-cysteine 84 and cysteine 80-cysteine 223. Aspartate 118 provides a ligand contact to Mg(2+). Asparagine 283 carries N-linked (GlcNAc...) asparagine glycosylation.

This sequence belongs to the arthropod phospholipase D family. Class II subfamily. Requires Mg(2+) as cofactor. In terms of tissue distribution, expressed by the venom gland.

It localises to the secreted. It catalyses the reaction an N-(acyl)-sphingosylphosphocholine = an N-(acyl)-sphingosyl-1,3-cyclic phosphate + choline. It carries out the reaction an N-(acyl)-sphingosylphosphoethanolamine = an N-(acyl)-sphingosyl-1,3-cyclic phosphate + ethanolamine. The enzyme catalyses a 1-acyl-sn-glycero-3-phosphocholine = a 1-acyl-sn-glycero-2,3-cyclic phosphate + choline. The catalysed reaction is a 1-acyl-sn-glycero-3-phosphoethanolamine = a 1-acyl-sn-glycero-2,3-cyclic phosphate + ethanolamine. Functionally, dermonecrotic toxins cleave the phosphodiester linkage between the phosphate and headgroup of certain phospholipids (sphingolipid and lysolipid substrates), forming an alcohol (often choline) and a cyclic phosphate. This toxin acts on sphingomyelin (SM). It may also act on ceramide phosphoethanolamine (CPE), lysophosphatidylcholine (LPC) and lysophosphatidylethanolamine (LPE), but not on lysophosphatidylserine (LPS), and lysophosphatidylglycerol (LPG). It acts by transphosphatidylation, releasing exclusively cyclic phosphate products as second products. Induces dermonecrosis, hemolysis, increased vascular permeability, edema, inflammatory response, and platelet aggregation. The polypeptide is Dermonecrotic toxin LiSicTox-alphaIA2bi (Loxosceles intermedia (Brown spider)).